Consider the following 186-residue polypeptide: Ribosome-recycling factor (186 aa).

This sequence belongs to the RRF family.

The protein localises to the cytoplasm. In terms of biological role, responsible for the release of ribosomes from messenger RNA at the termination of protein biosynthesis. May increase the efficiency of translation by recycling ribosomes from one round of translation to another. The polypeptide is Ribosome-recycling factor (Chlorobium limicola (strain DSM 245 / NBRC 103803 / 6330)).